Consider the following 219-residue polypeptide: UPF0502 protein HCH_06091 (219 aa).

It belongs to the UPF0502 family.

This Hahella chejuensis (strain KCTC 2396) protein is UPF0502 protein HCH_06091.